The sequence spans 49 residues: MAQRKIALACSVCGSRNYTITASATRTKRLEVMKFCKFCGKHTLHRETR.

Belongs to the bacterial ribosomal protein bL33 family.

In Levilactobacillus brevis (strain ATCC 367 / BCRC 12310 / CIP 105137 / JCM 1170 / LMG 11437 / NCIMB 947 / NCTC 947) (Lactobacillus brevis), this protein is Large ribosomal subunit protein bL33A.